Reading from the N-terminus, the 303-residue chain is tRNA pseudouridine synthase B (303 aa).

Aspartate 38 serves as the catalytic Nucleophile.

It belongs to the pseudouridine synthase TruB family. Type 1 subfamily.

The enzyme catalyses uridine(55) in tRNA = pseudouridine(55) in tRNA. Responsible for synthesis of pseudouridine from uracil-55 in the psi GC loop of transfer RNAs. This chain is tRNA pseudouridine synthase B, found in Levilactobacillus brevis (strain ATCC 367 / BCRC 12310 / CIP 105137 / JCM 1170 / LMG 11437 / NCIMB 947 / NCTC 947) (Lactobacillus brevis).